A 94-amino-acid chain; its full sequence is Phormicin (94 aa).

An N-terminal signal peptide occupies residues 1–23 (MKFFMVFVVTFCLAVCFVSQSLA). A propeptide spanning residues 24–54 (IPADAANDAHFVDGVQALKEIEPELHGRYKR) is cleaved from the precursor. Intrachain disulfides connect C57/C84, C70/C90, and C74/C92.

Belongs to the invertebrate defensin family. Type 1 subfamily.

The protein resides in the secreted. In terms of biological role, responsible for the anti Gram-positive activity of immune hemolymph of P.terraenovae. The polypeptide is Phormicin (Protophormia terraenovae (Northern blowfly)).